The following is a 218-amino-acid chain: MTEPRLKIALTKGRVEQQVLPLLEEAGLDCSQVRNKQRRLIFDSETQPYEFILAKGPDVTTFLERGAADIGIVGSDILTEHESTQYELLDLGVGKCQFVLASTADFDPVAPRRKIIGTKYPLITQRYFDRLGQDVEIIKIEGSVELAPLTGLADAIVDITETGTTIRENHLQIYDYLQPVSTRLVVNRLALKQQQAAIFDLVDRLATVVDTNNPKEFV.

This sequence belongs to the ATP phosphoribosyltransferase family. Short subfamily. Heteromultimer composed of HisG and HisZ subunits.

It is found in the cytoplasm. It catalyses the reaction 1-(5-phospho-beta-D-ribosyl)-ATP + diphosphate = 5-phospho-alpha-D-ribose 1-diphosphate + ATP. It participates in amino-acid biosynthesis; L-histidine biosynthesis; L-histidine from 5-phospho-alpha-D-ribose 1-diphosphate: step 1/9. Functionally, catalyzes the condensation of ATP and 5-phosphoribose 1-diphosphate to form N'-(5'-phosphoribosyl)-ATP (PR-ATP). Has a crucial role in the pathway because the rate of histidine biosynthesis seems to be controlled primarily by regulation of HisG enzymatic activity. This Lactiplantibacillus plantarum (strain ATCC BAA-793 / NCIMB 8826 / WCFS1) (Lactobacillus plantarum) protein is ATP phosphoribosyltransferase.